Reading from the N-terminus, the 458-residue chain is Sphingomyelinase DDB_G0288017 (458 aa).

Positions asparagine 91–asparagine 111 are disordered. Glutamate 135 is a binding site for Mg(2+). The Proton acceptor role is filled by histidine 447.

This sequence belongs to the neutral sphingomyelinase family. Mg(2+) serves as cofactor.

It catalyses the reaction a sphingomyelin + H2O = phosphocholine + an N-acylsphing-4-enine + H(+). It participates in lipid metabolism; sphingolipid metabolism. Catalyzes the hydrolysis of sphingomyelin to form ceramide and phosphocholine. The chain is Sphingomyelinase DDB_G0288017 from Dictyostelium discoideum (Social amoeba).